Consider the following 470-residue polypeptide: Mitogen-activated protein kinase 15 (470 aa).

A Protein kinase domain is found at 13–306 (FDLQKRLGKG…VEQCLVHPYV (294 aa)). ATP-binding positions include 19–27 (LGKGAYGIV) and lysine 42. Residue aspartate 137 is the Proton acceptor of the active site. Threonine 178 is modified (phosphothreonine). The TXY signature appears at 178-180 (TEY). Tyrosine 180 carries the post-translational modification Phosphotyrosine. Residues 362–445 (PYGEDKSRAP…PSSIKQRRRS (84 aa)) are disordered. Residues 394–406 (MDKNNSSSHDSSS) are compositionally biased toward low complexity. Basic and acidic residues predominate over residues 409–426 (LRERAASAESRTSKDSNG).

Belongs to the protein kinase superfamily. CMGC Ser/Thr protein kinase family. MAP kinase subfamily. The cofactor is Mg(2+). Dually phosphorylated on Thr-178 and Tyr-180, which activates the enzyme. Expressed in the URX neuron and in many other head sensory neurons. Isoform a: Expressed in head and tail ciliated sensory neurons, and in mid-body neurons. Isoform c: Expressed in head and tail ciliated sensory neurons, and in mid-body neurons.

It is found in the cell projection. It localises to the cilium. The protein localises to the cilium membrane. The protein resides in the cytoplasm. Its subcellular location is the cytoskeleton. It is found in the cilium axoneme. It localises to the cilium basal body. The protein localises to the cell junction. The protein resides in the perikaryon. Its subcellular location is the dendrite. The catalysed reaction is L-seryl-[protein] + ATP = O-phospho-L-seryl-[protein] + ADP + H(+). It catalyses the reaction L-threonyl-[protein] + ATP = O-phospho-L-threonyl-[protein] + ADP + H(+). Its activity is regulated as follows. Activated by threonine and tyrosine phosphorylation. Its function is as follows. Atypical MAPK protein. Regulates primary cilium formation in sensory neurons and the localization of ciliary proteins involved in cilium structure, transport, and signaling. Acts in dopamine (DA) neurons to support synaptic membrane dat-1 availability via activation of rho-1 thereby sustaining normal levels of DA clearance. Plays a role in male mating behavior, probably in part through regulating the localization of the polycystin pkd-2. Functions postembryonically in the URX sensory neurons to constrain URX dendrite growth throughout lifetime, probably by restricting expansion of the subcellular sensory compartment at the dendrite ending. The protein is Mitogen-activated protein kinase 15 of Caenorhabditis elegans.